The following is a 661-amino-acid chain: SUMO-activating enzyme subunit 2 (661 aa).

Residues 29-34 (GAGGIG), Asp53, 61-64 (NLNR), Lys77, and 122-127 (DNISAR) contribute to the ATP site. Zn(2+) contacts are provided by Cys163 and Cys166. The active-site Glycyl thioester intermediate is the Cys178. Cys436 and Cys439 together coordinate Zn(2+). The tract at residues 545-661 (KKQQQKEKDQ…SKKLKSNLQD (117 aa)) is disordered. The segment covering 548 to 563 (QQKEKDQKEGKTTTIE) has biased composition (basic and acidic residues). 2 stretches are compositionally biased toward low complexity: residues 577–607 (TSQT…NNNN) and 623–634 (SSTTTSSATPSI).

The protein belongs to the ubiquitin-activating E1 family. As to quaternary structure, heterodimer of sae1 and sae2. The complex binds sumo via sae2.

It is found in the nucleus. It participates in protein modification; protein sumoylation. Functionally, the dimeric enzyme acts as an E1 ligase for sumo. It mediates ATP-dependent activation of sumo and formation of a thioester with a conserved cysteine residue on sae2. The polypeptide is SUMO-activating enzyme subunit 2 (uba2) (Dictyostelium discoideum (Social amoeba)).